The following is a 634-amino-acid chain: Putative ABC transporter ATP-binding protein MG015 homolog (634 aa).

6 helical membrane-spanning segments follow: residues V54–L74, L111–A131, V189–V209, V213–L233, V296–I316, and I325–L345. Positions V54–L364 constitute an ABC transmembrane type-1 domain. In terms of domain architecture, ABC transporter spans I397–S631. G430–S437 contributes to the ATP binding site.

This sequence belongs to the ABC transporter superfamily.

Its subcellular location is the cell membrane. This chain is Putative ABC transporter ATP-binding protein MG015 homolog, found in Mycoplasma pneumoniae (strain ATCC 29342 / M129 / Subtype 1) (Mycoplasmoides pneumoniae).